Here is a 278-residue protein sequence, read N- to C-terminus: uncharacterized protein (278 aa).

This is an uncharacterized protein from Escherichia coli (Bacteriophage T4).